We begin with the raw amino-acid sequence, 280 residues long: MILKSGLYIVSTPIGNFEDITLRAISTLKNSDIILCEDTRISQKLLAKHYIHTKLQIYNDHSDYKDREYIISLIKAGNVVSLISDAGTPLISDPGYKLVRDLRNLNYYIEVVPGVSSPITALTLSSLPTDRFLFSGFLPKTIESKKKIFAELVNLKATLIFFDTASRLINTLLLAKEIFGNREICVARELTKIYQETKTGDIDEIIEFYKNNILKGEIVLLISGNVQVQNKQINLEKFIEFCLSKNLSSKTIIELAYDKFKDVYSKKEIYSVVHKKKFTA.

The protein belongs to the methyltransferase superfamily. RsmI family.

The protein localises to the cytoplasm. The enzyme catalyses cytidine(1402) in 16S rRNA + S-adenosyl-L-methionine = 2'-O-methylcytidine(1402) in 16S rRNA + S-adenosyl-L-homocysteine + H(+). Catalyzes the 2'-O-methylation of the ribose of cytidine 1402 (C1402) in 16S rRNA. This chain is Ribosomal RNA small subunit methyltransferase I, found in Rickettsia prowazekii (strain Madrid E).